A 228-amino-acid polypeptide reads, in one-letter code: Cytochrome c oxidase subunit 2 (228 aa).

Topologically, residues 1-26 (MATWANLGLQDSSSPLMEQLNFFHDH) are mitochondrial intermembrane. Residues 27-48 (TLLILTMITILVGYIMGMLSFN) form a helical membrane-spanning segment. The Mitochondrial matrix segment spans residues 49-62 (KFTNRFLLHGQTIE). Residues 63–82 (IIWTVLPAIILMFIAFPSLR) traverse the membrane as a helical segment. Over 83–228 (LLYLMDEINT…FIKWITSMTN (146 aa)) the chain is Mitochondrial intermembrane. Residues H161, C196, E198, C200, H204, and M207 each contribute to the Cu cation site. Mg(2+) is bound at residue E198.

Belongs to the cytochrome c oxidase subunit 2 family. As to quaternary structure, component of the cytochrome c oxidase (complex IV, CIV), a multisubunit enzyme composed of a catalytic core of 3 subunits and several supernumerary subunits. The complex exists as a monomer or a dimer and forms supercomplexes (SCs) in the inner mitochondrial membrane with ubiquinol-cytochrome c oxidoreductase (cytochrome b-c1 complex, complex III, CIII). Cu cation serves as cofactor.

It is found in the mitochondrion inner membrane. The catalysed reaction is 4 Fe(II)-[cytochrome c] + O2 + 8 H(+)(in) = 4 Fe(III)-[cytochrome c] + 2 H2O + 4 H(+)(out). Functionally, component of the cytochrome c oxidase, the last enzyme in the mitochondrial electron transport chain which drives oxidative phosphorylation. The respiratory chain contains 3 multisubunit complexes succinate dehydrogenase (complex II, CII), ubiquinol-cytochrome c oxidoreductase (cytochrome b-c1 complex, complex III, CIII) and cytochrome c oxidase (complex IV, CIV), that cooperate to transfer electrons derived from NADH and succinate to molecular oxygen, creating an electrochemical gradient over the inner membrane that drives transmembrane transport and the ATP synthase. Cytochrome c oxidase is the component of the respiratory chain that catalyzes the reduction of oxygen to water. Electrons originating from reduced cytochrome c in the intermembrane space (IMS) are transferred via the dinuclear copper A center (CU(A)) of subunit 2 and heme A of subunit 1 to the active site in subunit 1, a binuclear center (BNC) formed by heme A3 and copper B (CU(B)). The BNC reduces molecular oxygen to 2 water molecules using 4 electrons from cytochrome c in the IMS and 4 protons from the mitochondrial matrix. In Anopheles gambiae (African malaria mosquito), this protein is Cytochrome c oxidase subunit 2 (COII).